The chain runs to 126 residues: Holo-[acyl-carrier-protein] synthase (126 aa).

2 residues coordinate Mg(2+): Asp8 and Glu59.

Belongs to the P-Pant transferase superfamily. AcpS family. Requires Mg(2+) as cofactor.

The protein resides in the cytoplasm. The catalysed reaction is apo-[ACP] + CoA = holo-[ACP] + adenosine 3',5'-bisphosphate + H(+). In terms of biological role, transfers the 4'-phosphopantetheine moiety from coenzyme A to a Ser of acyl-carrier-protein. This Rickettsia akari (strain Hartford) protein is Holo-[acyl-carrier-protein] synthase.